Here is an 868-residue protein sequence, read N- to C-terminus: Facilitated trehalose transporter Tret1 (868 aa).

2 disordered regions span residues 1 to 213 (MSGR…QKAT) and 257 to 314 (KESS…LIHR). The Cytoplasmic portion of the chain corresponds to 1 to 403 (MSGRDNRGAG…VYRPTTNPIY (403 aa)). The span at 25 to 43 (KLKEKLTRAGDDQGYHRVE) shows a compositional bias: basic and acidic residues. Composition is skewed to low complexity over residues 44–57 (SNLS…SLDT), 79–91 (PQQQ…QQLR), and 117–126 (PFQQQQQRTP). Composition is skewed to basic and acidic residues over residues 146–155 (EIREHRDRQQ) and 257–290 (KESS…KLDK). Phosphoserine occurs at positions 259, 260, 261, 331, and 333. Positions 335–367 (EDFHTSRQHFQQQRSISTDSRKSRRPYEMDEMG) are disordered. Polar residues predominate over residues 342–352 (QHFQQQRSIST). Residues 353–367 (DSRKSRRPYEMDEMG) are compositionally biased toward basic and acidic residues. A helical membrane pass occupies residues 404 to 424 (IWTQVLAALSVSLGSLVVGFV). The Extracellular portion of the chain corresponds to 425 to 451 (SAYTSPALVSMTNRNMTSFEVTPQAAS). A glycan (N-linked (GlcNAc...) asparagine) is linked at Asn439. The helical transmembrane segment at 452 to 472 (WVGGIMPLAGLAGGIAGGPFI) threads the bilayer. The Cytoplasmic segment spans residues 473–484 (EYLGRRNTILAT). The helical transmembrane segment at 485-505 (AIPFIVSSLLIACAVNVAMVL) threads the bilayer. The Extracellular portion of the chain corresponds to 506–508 (AGR). A helical transmembrane segment spans residues 509 to 529 (FLAGFCVGIASLSLPVYLGET). Residues 530 to 535 (VQPEVR) are Cytoplasmic-facing. A helical transmembrane segment spans residues 536 to 556 (GTLGLLPTAFGNIGILLCFVA). At 557-563 (GTYMDWS) the chain is on the extracellular side. A helical membrane pass occupies residues 564–584 (MLAFLGAALPVPFLILMFLIP). The Cytoplasmic portion of the chain corresponds to 585-653 (ETPRWFVSRG…NLKPLSISLG (69 aa)). Residues 654 to 674 (LMFFQQLSGINAVIFYTVSIF) traverse the membrane as a helical segment. Residues 675–684 (KDAGSTIDGN) are Extracellular-facing. The chain crosses the membrane as a helical span at residues 685–705 (LCTIIVGIVNFMATFIATLLI). The Cytoplasmic segment spans residues 706–711 (DRAGRK). Residues 712-732 (ILLYVSNIAMIITLFVLGGFF) traverse the membrane as a helical segment. Over 733 to 751 (YCKSHGQDVSQLGWLPLSC) the chain is Extracellular. The chain crosses the membrane as a helical span at residues 752 to 772 (FVIYILGFSLGFGPIPWLMMG). Over 773–778 (EILPSK) the chain is Cytoplasmic. A helical membrane pass occupies residues 779-799 (IRGSAASVATAFNWSCTFVVT). Topologically, residues 800-812 (KTFQDMIDFMGAH) are extracellular. A helical membrane pass occupies residues 813–833 (GAFWLFGSICFIGLFFVILYV). Over 834 to 868 (PETQGKTLEDIERKMMGRVRRMSSVANMKPLAFNM) the chain is Cytoplasmic. 2 positions are modified to phosphoserine: Ser856 and Ser857.

This sequence belongs to the major facilitator superfamily. Sugar transporter (TC 2.A.1.1) family. Trehalose transporter subfamily.

Its subcellular location is the cell membrane. Functionally, low-capacity facilitative transporter for trehalose. Does not transport maltose, sucrose or lactose. Mediates the bidirectional transfer of trehalose. Responsible for the transport of trehalose synthesized in the fat body and the incorporation of trehalose into other tissues that require a carbon source, thereby regulating trehalose levels in the hemolymph. The chain is Facilitated trehalose transporter Tret1 from Drosophila pseudoobscura pseudoobscura (Fruit fly).